The following is a 644-amino-acid chain: Exoribonuclease 2 (644 aa).

The 328-residue stretch at 189-516 (REDLTALDFV…NHRLLKAVIK (328 aa)) folds into the RNB domain. Positions 561–643 (DTRFAAEIVD…ETRSIIARPV (83 aa)) constitute an S1 motif domain.

This sequence belongs to the RNR ribonuclease family. RNase II subfamily.

It is found in the cytoplasm. The catalysed reaction is Exonucleolytic cleavage in the 3'- to 5'-direction to yield nucleoside 5'-phosphates.. Involved in mRNA degradation. Hydrolyzes single-stranded polyribonucleotides processively in the 3' to 5' direction. This chain is Exoribonuclease 2, found in Escherichia coli O6:K15:H31 (strain 536 / UPEC).